The chain runs to 354 residues: Homer protein homolog 2 (354 aa).

One can recognise a WH1 domain in the interval 1–110 (MGEQPIFTTR…EKFQEVREAA (110 aa)). Residues 92–120 (SEQQLTKFAEKFQEVREAARLARDKSQEK) are a coiled coil. The tract at residues 114–163 (RDKSQEKIETSSNHSQESGCETPSSTQASSVNGTDDEKASHASPADTHLK) is disordered. Positions 123–146 (TSSNHSQESGCETPSSTQASSVNG) are enriched in polar residues. The stretch at 160 to 329 (THLKSENDKL…RHLKGELKSF (170 aa)) forms a coiled coil.

It belongs to the Homer family. In terms of assembly, isoform 1 and isoform 2 encode coiled-coil structures that mediate homo- and heteromultimerization. Interacts with NFATC2; interaction is reduced by AKT activation. Interacts with NFATC1 and NFATC4. Interacts with DAGLA (via PPXXF motif); this interaction is required for the cell membrane localization of DAGLA. As to expression, constitutively expressed in the adult hippocampus.

Its subcellular location is the cytoplasm. The protein resides in the cell membrane. It is found in the postsynaptic density. It localises to the synapse. The protein localises to the cell projection. Its subcellular location is the stereocilium. Postsynaptic density scaffolding protein. Binds and cross-links cytoplasmic regions of GRM1, GRM5, ITPR1, DNM3, RYR1, RYR2, SHANK1 and SHANK3. By physically linking GRM1 and GRM5 with ER-associated ITPR1 receptors, it aids the coupling of surface receptors to intracellular calcium release. May also couple GRM1 to PI3 kinase through its interaction with AGAP2. Isoforms can be differently regulated and may play an important role in maintaining the plasticity at glutamatergic synapses. Required for normal hearing. Negatively regulates T cell activation by inhibiting the calcineurin-NFAT pathway. Acts by competing with calcineurin/PPP3CA for NFAT protein binding, hence preventing NFAT activation by PPP3CA. The chain is Homer protein homolog 2 from Rattus norvegicus (Rat).